The primary structure comprises 840 residues: Lethal(3)malignant brain tumor-like protein 1 (840 aa).

Ser117 carries the post-translational modification Phosphoserine. Residues 127 to 269 (EYEDGGAPAG…WSSSQPATGE (143 aa)) form a disordered region. A compositionally biased stretch (acidic residues) spans 156 to 165 (PNQDPPEDDS). Residues 200–210 (VENSSGSTSAS) are compositionally biased toward polar residues. Positions 236–247 (AMEKQEEGKDPE) are enriched in basic and acidic residues. Over residues 250–266 (PTASTPESEEWSSSQPA) the composition is skewed to polar residues. 3 MBT repeats span residues 274–374 (WSWE…LQPP), 382–481 (FSWS…LTPP), and 490–585 (FCWE…LQPP). The tract at residues 447–454 (FDNWDDTY) is interaction with monomethylated and dimethylated peptides. Positions 580-605 (HPLQPPLGPREPSSASPGGCPPLSYR) are disordered. The CCHHC-type zinc-finger motif lies at 613-656 (SKYSFHHRKCPTPGCDGSGHVTGKFTAHHCLSGCPLAERNQSRL). 4 residues coordinate Zn(2+): Cys622, Cys627, His640, and Cys646. The segment at 657–697 (KAELSDSEASARKKNLSGFSPRKKPRHHGRIGRPPKYRKIP) is disordered. The span at 677–695 (PRKKPRHHGRIGRPPKYRK) shows a compositional bias: basic residues.

Homodimer. Interacts with RB1/RB (when monomethylated at 'Lys-860'). Interacts with p53/TP53 (when monomethylated at 'Lys-382'). Interacts with CBX3, ETV6, KMT5A and VCP/p97. Ubiquitinated in a VCP/p97-dependent way following DNA damage, leading to its removal from DNA damage sites, promoting accessibility of H4K20me2 mark for DNA repair protein TP53BP1, which is then recruited to DNA damage sites. As to expression, widely expressed. Expression is reduced in colorectal cancer cell line SW480 and promyelocytic leukemia cell line HL-60.

The protein localises to the nucleus. Its function is as follows. Polycomb group (PcG) protein that specifically recognizes and binds mono- and dimethyllysine residues on target proteins, thereby acting as a 'reader' of a network of post-translational modifications. PcG proteins maintain the transcriptionally repressive state of genes: acts as a chromatin compaction factor by recognizing and binding mono- and dimethylated histone H1b/H1-4 at 'Lys-26' (H1bK26me1 and H1bK26me2) and histone H4 at 'Lys-20' (H4K20me1 and H4K20me2), leading to condense chromatin and repress transcription. Recognizes and binds p53/TP53 monomethylated at 'Lys-382', leading to repress p53/TP53-target genes. Also recognizes and binds RB1/RB monomethylated at 'Lys-860'. Participates in the ETV6-mediated repression. Probably plays a role in cell proliferation. Overexpression induces multinucleated cells, suggesting that it is required to accomplish normal mitosis. This is Lethal(3)malignant brain tumor-like protein 1 (L3MBTL1) from Homo sapiens (Human).